A 159-amino-acid polypeptide reads, in one-letter code: IQ domain-containing protein J (159 aa).

In terms of domain architecture, IQ spans 47-67; sequence ESKVKIIQRAWREYLQRQEPL. The segment at 63 to 88 is disordered; sequence RQEPLGKRSPSPPSVSSEKLSSSVSM. Over residues 76-87 the composition is skewed to low complexity; the sequence is SVSSEKLSSSVS.

In Homo sapiens (Human), this protein is IQ domain-containing protein J.